The sequence spans 357 residues: Peptide chain release factor 1 (357 aa).

Glutamine 233 carries the post-translational modification N5-methylglutamine.

Belongs to the prokaryotic/mitochondrial release factor family. In terms of processing, methylated by PrmC. Methylation increases the termination efficiency of RF1.

The protein localises to the cytoplasm. In terms of biological role, peptide chain release factor 1 directs the termination of translation in response to the peptide chain termination codons UAG and UAA. This is Peptide chain release factor 1 from Leuconostoc citreum (strain KM20).